We begin with the raw amino-acid sequence, 373 residues long: tRNA-specific 2-thiouridylase MnmA (373 aa).

Residues 12–19 and M38 each bind ATP; that span reads GMSGGVDS. An interaction with target base in tRNA region spans residues 98–100; the sequence is NPD. The active-site Nucleophile is the C103. An intrachain disulfide couples C103 to C200. An ATP-binding site is contributed by G127. Residues 150-152 are interaction with tRNA; it reads KDQ. The Cysteine persulfide intermediate role is filled by C200. Residues 312–313 are interaction with tRNA; sequence RY.

Belongs to the MnmA/TRMU family.

Its subcellular location is the cytoplasm. The catalysed reaction is S-sulfanyl-L-cysteinyl-[protein] + uridine(34) in tRNA + AH2 + ATP = 2-thiouridine(34) in tRNA + L-cysteinyl-[protein] + A + AMP + diphosphate + H(+). Functionally, catalyzes the 2-thiolation of uridine at the wobble position (U34) of tRNA, leading to the formation of s(2)U34. The polypeptide is tRNA-specific 2-thiouridylase MnmA (Streptococcus thermophilus (strain ATCC BAA-491 / LMD-9)).